The primary structure comprises 314 residues: 4-hydroxy-3-methylbut-2-enyl diphosphate reductase (314 aa).

[4Fe-4S] cluster is bound at residue C12. Residues H41 and H74 each coordinate (2E)-4-hydroxy-3-methylbut-2-enyl diphosphate. The dimethylallyl diphosphate site is built by H41 and H74. Positions 41 and 74 each coordinate isopentenyl diphosphate. Residue C96 coordinates [4Fe-4S] cluster. H124 lines the (2E)-4-hydroxy-3-methylbut-2-enyl diphosphate pocket. H124 serves as a coordination point for dimethylallyl diphosphate. H124 contacts isopentenyl diphosphate. The active-site Proton donor is the E126. A (2E)-4-hydroxy-3-methylbut-2-enyl diphosphate-binding site is contributed by T167. C197 contacts [4Fe-4S] cluster. Positions 225, 226, 227, and 269 each coordinate (2E)-4-hydroxy-3-methylbut-2-enyl diphosphate. 4 residues coordinate dimethylallyl diphosphate: S225, S226, N227, and S269. The isopentenyl diphosphate site is built by S225, S226, N227, and S269.

Belongs to the IspH family. [4Fe-4S] cluster serves as cofactor.

It carries out the reaction isopentenyl diphosphate + 2 oxidized [2Fe-2S]-[ferredoxin] + H2O = (2E)-4-hydroxy-3-methylbut-2-enyl diphosphate + 2 reduced [2Fe-2S]-[ferredoxin] + 2 H(+). The enzyme catalyses dimethylallyl diphosphate + 2 oxidized [2Fe-2S]-[ferredoxin] + H2O = (2E)-4-hydroxy-3-methylbut-2-enyl diphosphate + 2 reduced [2Fe-2S]-[ferredoxin] + 2 H(+). It functions in the pathway isoprenoid biosynthesis; dimethylallyl diphosphate biosynthesis; dimethylallyl diphosphate from (2E)-4-hydroxy-3-methylbutenyl diphosphate: step 1/1. Its pathway is isoprenoid biosynthesis; isopentenyl diphosphate biosynthesis via DXP pathway; isopentenyl diphosphate from 1-deoxy-D-xylulose 5-phosphate: step 6/6. Catalyzes the conversion of 1-hydroxy-2-methyl-2-(E)-butenyl 4-diphosphate (HMBPP) into a mixture of isopentenyl diphosphate (IPP) and dimethylallyl diphosphate (DMAPP). Acts in the terminal step of the DOXP/MEP pathway for isoprenoid precursor biosynthesis. This is 4-hydroxy-3-methylbut-2-enyl diphosphate reductase from Haemophilus influenzae (strain 86-028NP).